A 218-amino-acid polypeptide reads, in one-letter code: Thiopurine S-methyltransferase (218 aa).

S-adenosyl-L-methionine is bound by residues W10, L45, E66, and R123.

This sequence belongs to the class I-like SAM-binding methyltransferase superfamily. TPMT family.

Its subcellular location is the cytoplasm. It catalyses the reaction S-adenosyl-L-methionine + a thiopurine = S-adenosyl-L-homocysteine + a thiopurine S-methylether.. The polypeptide is Thiopurine S-methyltransferase (Xanthomonas axonopodis pv. citri (strain 306)).